We begin with the raw amino-acid sequence, 149 residues long: MRGPVGVRRDIEDTMRMLKLLRRNWCVLIDDRPSYLGMLQKIKDYVTWGEVEPDTVAALLKKRGELEGGRPVTDEYVSEHTEYDSVEEFARAYCEFEAELDDIPKLKPFFRLHPPRGGYERGGIKKPYTLGGALGYRGKAINDLLERMI.

This sequence belongs to the universal ribosomal protein uL30 family. In terms of assembly, part of the 50S ribosomal subunit.

This chain is Large ribosomal subunit protein uL30, found in Methanopyrus kandleri (strain AV19 / DSM 6324 / JCM 9639 / NBRC 100938).